Consider the following 206-residue polypeptide: Holliday junction branch migration complex subunit RuvA (206 aa).

Residues 1 to 64 form a domain I region; sequence MIGKLKGTLD…EDMLRLYGFQ (64 aa). The segment at 65–144 is domain II; it reads SALEREWFRL…AYAGAASGTI (80 aa). Residues 145–154 are flexible linker; sequence GLKQELGEGV. The segment at 154–206 is domain III; that stretch reads VAPAPITDAVSALVNLGYSRDTAANAVAAALKTAGEDADASKLIRFGLKELAR.

Belongs to the RuvA family. In terms of assembly, homotetramer. Forms an RuvA(8)-RuvB(12)-Holliday junction (HJ) complex. HJ DNA is sandwiched between 2 RuvA tetramers; dsDNA enters through RuvA and exits via RuvB. An RuvB hexamer assembles on each DNA strand where it exits the tetramer. Each RuvB hexamer is contacted by two RuvA subunits (via domain III) on 2 adjacent RuvB subunits; this complex drives branch migration. In the full resolvosome a probable DNA-RuvA(4)-RuvB(12)-RuvC(2) complex forms which resolves the HJ.

It localises to the cytoplasm. Functionally, the RuvA-RuvB-RuvC complex processes Holliday junction (HJ) DNA during genetic recombination and DNA repair, while the RuvA-RuvB complex plays an important role in the rescue of blocked DNA replication forks via replication fork reversal (RFR). RuvA specifically binds to HJ cruciform DNA, conferring on it an open structure. The RuvB hexamer acts as an ATP-dependent pump, pulling dsDNA into and through the RuvAB complex. HJ branch migration allows RuvC to scan DNA until it finds its consensus sequence, where it cleaves and resolves the cruciform DNA. This Mesorhizobium japonicum (strain LMG 29417 / CECT 9101 / MAFF 303099) (Mesorhizobium loti (strain MAFF 303099)) protein is Holliday junction branch migration complex subunit RuvA.